The chain runs to 158 residues: Sec-independent protein translocase protein TatB (158 aa).

The helical transmembrane segment at 1 to 21 (MFGISFSELLLVGLVALLVLG) threads the bilayer. The interval 73-158 (DEARKMFAPN…HDSSLPPRAP (86 aa)) is disordered. Low complexity predominate over residues 80–90 (APNQPSENSPE).

Belongs to the TatB family. As to quaternary structure, the Tat system comprises two distinct complexes: a TatABC complex, containing multiple copies of TatA, TatB and TatC subunits, and a separate TatA complex, containing only TatA subunits. Substrates initially bind to the TatABC complex, which probably triggers association of the separate TatA complex to form the active translocon.

It is found in the cell inner membrane. Its function is as follows. Part of the twin-arginine translocation (Tat) system that transports large folded proteins containing a characteristic twin-arginine motif in their signal peptide across membranes. Together with TatC, TatB is part of a receptor directly interacting with Tat signal peptides. TatB may form an oligomeric binding site that transiently accommodates folded Tat precursor proteins before their translocation. The sequence is that of Sec-independent protein translocase protein TatB from Pseudomonas syringae pv. syringae (strain B728a).